The chain runs to 330 residues: Carbonic anhydrase (330 aa).

The segment at 1-109 (MSTASAFATN…AAARIDQITA (109 aa)) is chloroplast transit peptide-like.

The protein belongs to the beta-class carbonic anhydrase family.

The protein resides in the cytoplasm. The catalysed reaction is hydrogencarbonate + H(+) = CO2 + H2O. Its function is as follows. Reversible hydration of carbon dioxide. This chain is Carbonic anhydrase, found in Flaveria brownii (Brown's yellowtops).